Here is a 231-residue protein sequence, read N- to C-terminus: Adenosylcobinamide-GDP ribazoletransferase (231 aa).

A run of 6 helical transmembrane segments spans residues 29–49 (ICAY…SMKL), 53–73 (NFLW…LFHF), 101–121 (IGPF…YAFL), 126–146 (IDLI…LHFG), 167–187 (LISL…IISL), and 211–231 (DVLG…LSLI).

Belongs to the CobS family. Requires Mg(2+) as cofactor.

It is found in the cell inner membrane. The enzyme catalyses alpha-ribazole + adenosylcob(III)inamide-GDP = adenosylcob(III)alamin + GMP + H(+). It catalyses the reaction alpha-ribazole 5'-phosphate + adenosylcob(III)inamide-GDP = adenosylcob(III)alamin 5'-phosphate + GMP + H(+). It functions in the pathway cofactor biosynthesis; adenosylcobalamin biosynthesis; adenosylcobalamin from cob(II)yrinate a,c-diamide: step 7/7. Functionally, joins adenosylcobinamide-GDP and alpha-ribazole to generate adenosylcobalamin (Ado-cobalamin). Also synthesizes adenosylcobalamin 5'-phosphate from adenosylcobinamide-GDP and alpha-ribazole 5'-phosphate. The chain is Adenosylcobinamide-GDP ribazoletransferase from Kosmotoga olearia (strain ATCC BAA-1733 / DSM 21960 / TBF 19.5.1).